The following is a 349-amino-acid chain: N-acetyl-gamma-glutamyl-phosphate reductase (349 aa).

The active site involves Cys-149.

This sequence belongs to the NAGSA dehydrogenase family. Type 1 subfamily.

The protein resides in the cytoplasm. It carries out the reaction N-acetyl-L-glutamate 5-semialdehyde + phosphate + NADP(+) = N-acetyl-L-glutamyl 5-phosphate + NADPH + H(+). It participates in amino-acid biosynthesis; L-arginine biosynthesis; N(2)-acetyl-L-ornithine from L-glutamate: step 3/4. Catalyzes the NADPH-dependent reduction of N-acetyl-5-glutamyl phosphate to yield N-acetyl-L-glutamate 5-semialdehyde. The chain is N-acetyl-gamma-glutamyl-phosphate reductase from Acinetobacter baumannii (strain ACICU).